Reading from the N-terminus, the 311-residue chain is tRNA-cytidine(32) 2-sulfurtransferase (311 aa).

A PP-loop motif motif is present at residues Ser-47–Ser-52. [4Fe-4S] cluster-binding residues include Cys-122, Cys-125, and Cys-213.

Belongs to the TtcA family. Homodimer. Mg(2+) is required as a cofactor. It depends on [4Fe-4S] cluster as a cofactor.

It localises to the cytoplasm. It carries out the reaction cytidine(32) in tRNA + S-sulfanyl-L-cysteinyl-[cysteine desulfurase] + AH2 + ATP = 2-thiocytidine(32) in tRNA + L-cysteinyl-[cysteine desulfurase] + A + AMP + diphosphate + H(+). The protein operates within tRNA modification. In terms of biological role, catalyzes the ATP-dependent 2-thiolation of cytidine in position 32 of tRNA, to form 2-thiocytidine (s(2)C32). The sulfur atoms are provided by the cysteine/cysteine desulfurase (IscS) system. This is tRNA-cytidine(32) 2-sulfurtransferase from Escherichia coli O81 (strain ED1a).